The primary structure comprises 1130 residues: MGKLIRMGTQERRLLRPKRLHWSRLLFLLGMLIIGSTYQHLRRPQNPPSMWTKVSSQQPIKLAVRDLPNNEMAVAGSDPPEASSEVEDGMLAAQDTVIMDEAAPSIAMEDTPNPPRTTKIPPASLKNSYSPTTAGTRRQKENIPPTPSGAPSHFISTPGRQRVKSYIPKPRGERKNSSPTHAREKGRTHTPSPAGAHTISPTATVRDRETMATYRLLETRFERTAGETTAASLKRMVLNTPTFLTHEVETNLMTSSSLVGKNTAVSLRKGERNISTTPQGAVPQHTPATSEEQMTVSTRMGSIPATIEGSTAARRINNPLSRTSAPAIRIASATNREKRPSTAPSTLVTPKATMSTQVHRCVVVEPAPAVPMTPSPGVTSILFPETPSSGPSALPPGWPNLHPKAEYPPDLFSVEDRRQGWVVLHIFGMMYVFVALAIVCDEYFVPALGVITHKLQISEDVAGATFMAAGGSAPELFTSLIGVFISHSNVGIGTIVGSAVFNILFVIGTCALFSREILNLTWWPLFRDVSFYILDLSMLIVFFLDSFIAWWESLLLLLAYALYVFTMKWNKQIELWVKEQLSRRPVAKVMALGDLSKPSEDAVEENEQQDSKKLKLPSVLTRGSSSASLHNSIIRNTIYHLMLHSLDPLGEARPSKDKQESLNQEARVLSQTKAESSPDEDEPAELPAVTVTPAPAPDAKGDQEDDPGCQEDVDEAERRGEMTGEEGEKETETEGKKDEQEGETEAERKEDEQEEETEAEGKEQEGETEAEGKEDEQEGETEAEGKKDEQEGETEAEGKEEQEGETEAEGKEDEQEGETEAEGKEEQEGETEAESKEVEQERETEAEGKDKHEGQGETQPDDTEVKDGEGETEANAEDQCEATQGEKGADGGGESDGGDSEEEEDEEDEEEEEEEDEEEEEEENEEPLSLEWPDSRQKQAIYLFLLPIVFPLWLTIPDVRRQESRKFFVITFLGSIIWIAMFSYLMVWWAHQVGETIGISEEIMGLTILAAGTSIPDLITSVIVARKGLGDMAVSSSVGSNIFDITVGLPVPWLLFSLINALQPVPVSSNGLFCAIVLLFLMLLFVIFSIASCKWRMNKILGFTMFLLYFVFLVISVMLEDRIISCPVSV.

The Extracellular segment spans residues 1–419 (MGKLIRMGTQ…DLFSVEDRRQ (419 aa)). Residues 104–209 (PSIAMEDTPN…SPTATVRDRE (106 aa)) form a disordered region. Polar residues predominate over residues 125–136 (LKNSYSPTTAGT). The segment covering 170–187 (PRGERKNSSPTHAREKGR) has biased composition (basic and acidic residues). N176 and N273 each carry an N-linked (GlcNAc...) asparagine glycan. The segment at 274–295 (ISTTPQGAVPQHTPATSEEQMT) is disordered. Residues 286–295 (TPATSEEQMT) are compositionally biased toward polar residues. The chain crosses the membrane as a helical span at residues 420-440 (GWVVLHIFGMMYVFVALAIVC). The Cytoplasmic portion of the chain corresponds to 441–464 (DEYFVPALGVITHKLQISEDVAGA). Residues 461-501 (VAGATFMAAGGSAPELFTSLIGVFISHSNVGIGTIVGSAVF) form an Alpha-1 repeat. A helical membrane pass occupies residues 465 to 485 (TFMAAGGSAPELFTSLIGVFI). Over 486–489 (SHSN) the chain is Extracellular. A helical membrane pass occupies residues 490 to 510 (VGIGTIVGSAVFNILFVIGTC). The Cytoplasmic portion of the chain corresponds to 511–530 (ALFSREILNLTWWPLFRDVS). The helical transmembrane segment at 531–551 (FYILDLSMLIVFFLDSFIAWW) threads the bilayer. E552 is a topological domain (extracellular). Residues 553–573 (SLLLLLAYALYVFTMKWNKQI) form a helical membrane-spanning segment. At 574 to 938 (ELWVKEQLSR…SLEWPDSRQK (365 aa)) the chain is on the cytoplasmic side. Residues 598–619 (PSEDAVEENEQQDSKKLKLPSV) are disordered. The residue at position 625 (S625) is a Phosphoserine. The disordered stretch occupies residues 650–932 (GEARPSKDKQ…ENEEPLSLEW (283 aa)). Residues 661–675 (SLNQEARVLSQTKAE) are compositionally biased toward polar residues. T690 is subject to Phosphothreonine. The span at 703–715 (QEDDPGCQEDVDE) shows a compositional bias: acidic residues. The segment covering 730-751 (ETETEGKKDEQEGETEAERKED) has biased composition (basic and acidic residues). Composition is skewed to acidic residues over residues 766-782 (GETE…GETE) and 802-820 (QEGE…GETE). Residues 833 to 855 (AESKEVEQERETEAEGKDKHEGQ) are compositionally biased toward basic and acidic residues. Acidic residues-rich tracts occupy residues 870 to 880 (GETEANAEDQC) and 896 to 928 (DGGD…EEPL). Residues 939–959 (QAIYLFLLPIVFPLWLTIPDV) form a helical membrane-spanning segment. Residues 960–966 (RRQESRK) lie on the Extracellular side of the membrane. A helical transmembrane segment spans residues 967–987 (FFVITFLGSIIWIAMFSYLMV). Topologically, residues 988–1002 (WWAHQVGETIGISEE) are cytoplasmic. A helical transmembrane segment spans residues 1003–1023 (IMGLTILAAGTSIPDLITSVI). Residues 1010-1041 (AAGTSIPDLITSVIVARKGLGDMAVSSSVGSN) form an Alpha-2 repeat. At 1024–1041 (VARKGLGDMAVSSSVGSN) the chain is on the extracellular side. Residues 1042–1062 (IFDITVGLPVPWLLFSLINAL) traverse the membrane as a helical segment. Topologically, residues 1063-1070 (QPVPVSSN) are cytoplasmic. Residues 1071-1091 (GLFCAIVLLFLMLLFVIFSIA) form a helical membrane-spanning segment. The Extracellular segment spans residues 1092–1099 (SCKWRMNK). The chain crosses the membrane as a helical span at residues 1100-1120 (ILGFTMFLLYFVFLVISVMLE). Residues 1121 to 1130 (DRIISCPVSV) lie on the Cytoplasmic side of the membrane.

Belongs to the Ca(2+):cation antiporter (CaCA) (TC 2.A.19) family. SLC24A subfamily. In terms of processing, the uncleaved signal sequence is required for efficient membrane targeting and proper membrane integration and topology.

The protein resides in the cell membrane. It carries out the reaction Ca(2+)(out) + K(+)(out) + 4 Na(+)(in) = Ca(2+)(in) + K(+)(in) + 4 Na(+)(out). Calcium, potassium:sodium antiporter that transports 1 Ca(2+) and 1 K(+) in exchange for 4 Na(+). Critical component of the visual transduction cascade, controlling the calcium concentration of outer segments during light and darkness. Light causes a rapid lowering of cytosolic free calcium in the outer segment of both retinal rod and cone photoreceptors and the light-induced lowering of calcium is caused by extrusion via this protein which plays a key role in the process of light adaptation. This Mus musculus (Mouse) protein is Sodium/potassium/calcium exchanger 1.